We begin with the raw amino-acid sequence, 603 residues long: Aquaporin-2 (603 aa).

Residues 40–70 (SLKKYKYNLFFEFIGSFLFVFFISIYMLNSN) form a helical membrane-spanning segment. Composition is skewed to basic and acidic residues over residues 135–149 (NNKS…DDKI) and 156–190 (EFEK…EDPK). The disordered stretch occupies residues 135-200 (NNKSKREVER…NISNKNENYD (66 aa)). A compositionally biased stretch (polar residues) spans 191–200 (NISNKNENYD). 5 helical membrane passes run 282-299 (HAIY…FILL), 321-346 (FALS…AHLY), 360-393 (IIKT…EENK), 442-471 (NKYI…VTNT), and 509-542 (ITKI…FLSL).

The protein belongs to the MIP/aquaporin (TC 1.A.8) family.

The protein resides in the endomembrane system. The catalysed reaction is H2O(in) = H2O(out). It catalyses the reaction glycerol(in) = glycerol(out). In terms of biological role, required for sporozoite development in the mosquito vector. The sequence is that of Aquaporin-2 from Plasmodium falciparum (isolate NF54).